The sequence spans 711 residues: Ribosomal RNA large subunit methyltransferase K/L (711 aa).

The region spanning 43–154 (LAYRITLWSR…RGQITLGINF (112 aa)) is the THUMP domain.

The protein belongs to the methyltransferase superfamily. RlmKL family.

It localises to the cytoplasm. It catalyses the reaction guanosine(2445) in 23S rRNA + S-adenosyl-L-methionine = N(2)-methylguanosine(2445) in 23S rRNA + S-adenosyl-L-homocysteine + H(+). It carries out the reaction guanosine(2069) in 23S rRNA + S-adenosyl-L-methionine = N(2)-methylguanosine(2069) in 23S rRNA + S-adenosyl-L-homocysteine + H(+). Its function is as follows. Specifically methylates the guanine in position 2445 (m2G2445) and the guanine in position 2069 (m7G2069) of 23S rRNA. The polypeptide is Ribosomal RNA large subunit methyltransferase K/L (Shewanella loihica (strain ATCC BAA-1088 / PV-4)).